A 264-amino-acid chain; its full sequence is Protein ADMETOS (264 aa).

In terms of tissue distribution, paternally imprinted expression in the endosperm.

Functionally, product of a dosage-sensitive gene that contributes to the maintenance of paternally and maternally imprinted gene expression in the endosperm in order to balance parental contributions. Underlies postzygotic reproductive isolation by promoting triploid seed arrest in a genetic dosage-dependent manner, thus being a component of postzygotic interploidy hybridization barriers. The sequence is that of Protein ADMETOS from Arabidopsis thaliana (Mouse-ear cress).